The primary structure comprises 422 residues: Probable glucuronosyltransferase Os01g0926400 (422 aa).

At M1 to G8 the chain is on the cytoplasmic side. A helical; Signal-anchor for type II membrane protein transmembrane segment spans residues V9–A29. The Lumenal portion of the chain corresponds to A30–W422. N-linked (GlcNAc...) asparagine glycosylation is present at N149.

It belongs to the glycosyltransferase 47 family.

It is found in the golgi apparatus membrane. Involved in the synthesis of glucuronoxylan hemicellulose in secondary cell walls. The chain is Probable glucuronosyltransferase Os01g0926400 from Oryza sativa subsp. japonica (Rice).